An 86-amino-acid chain; its full sequence is Large ribosomal subunit protein uL23 (86 aa).

This sequence belongs to the universal ribosomal protein uL23 family. Part of the 50S ribosomal subunit. Contacts protein L29.

Binds to 23S rRNA. One of the proteins that surrounds the polypeptide exit tunnel on the outside of the ribosome. This is Large ribosomal subunit protein uL23 from Methanococcus vannielii (strain ATCC 35089 / DSM 1224 / JCM 13029 / OCM 148 / SB).